We begin with the raw amino-acid sequence, 397 residues long: Beta sliding clamp (397 aa).

The protein belongs to the beta sliding clamp family. Forms a ring-shaped head-to-tail homodimer around DNA which binds and tethers DNA polymerases and other proteins to the DNA. The DNA replisome complex has a single clamp-loading complex (3 tau and 1 each of delta, delta', psi and chi subunits) which binds 3 Pol III cores (1 core on the leading strand and 2 on the lagging strand) each with a beta sliding clamp dimer. Additional proteins in the replisome are other copies of gamma, psi and chi, Ssb, DNA helicase and RNA primase.

The protein resides in the cytoplasm. Confers DNA tethering and processivity to DNA polymerases and other proteins. Acts as a clamp, forming a ring around DNA (a reaction catalyzed by the clamp-loading complex) which diffuses in an ATP-independent manner freely and bidirectionally along dsDNA. Initially characterized for its ability to contact the catalytic subunit of DNA polymerase III (Pol III), a complex, multichain enzyme responsible for most of the replicative synthesis in bacteria; Pol III exhibits 3'-5' exonuclease proofreading activity. The beta chain is required for initiation of replication as well as for processivity of DNA replication. This Mycolicibacterium smegmatis (strain ATCC 700084 / mc(2)155) (Mycobacterium smegmatis) protein is Beta sliding clamp (dnaN).